We begin with the raw amino-acid sequence, 392 residues long: Succinate--CoA ligase [ADP-forming] subunit beta (392 aa).

One can recognise an ATP-grasp domain in the interval 9–248 (KGILKQFGVA…ITEEDPLEYE (240 aa)). ATP-binding positions include lysine 50, 57 to 59 (GRG), glutamate 103, methionine 106, and glutamate 111. Residues asparagine 203 and aspartate 217 each coordinate Mg(2+). Substrate is bound by residues asparagine 268 and 325 to 327 (GIV).

Belongs to the succinate/malate CoA ligase beta subunit family. As to quaternary structure, heterotetramer of two alpha and two beta subunits. It depends on Mg(2+) as a cofactor.

The enzyme catalyses succinate + ATP + CoA = succinyl-CoA + ADP + phosphate. It carries out the reaction GTP + succinate + CoA = succinyl-CoA + GDP + phosphate. Its pathway is carbohydrate metabolism; tricarboxylic acid cycle; succinate from succinyl-CoA (ligase route): step 1/1. In terms of biological role, succinyl-CoA synthetase functions in the citric acid cycle (TCA), coupling the hydrolysis of succinyl-CoA to the synthesis of either ATP or GTP and thus represents the only step of substrate-level phosphorylation in the TCA. The beta subunit provides nucleotide specificity of the enzyme and binds the substrate succinate, while the binding sites for coenzyme A and phosphate are found in the alpha subunit. In Chlorobaculum tepidum (strain ATCC 49652 / DSM 12025 / NBRC 103806 / TLS) (Chlorobium tepidum), this protein is Succinate--CoA ligase [ADP-forming] subunit beta.